The primary structure comprises 21 residues: LIGPVLGLVGSALGGLLKKIG.

Ile-2 is modified (D-allo-isoleucine). Position 20 is an isoleucine amide (Ile-20).

This sequence belongs to the bombinin family. As to expression, expressed by the skin glands.

Its subcellular location is the secreted. In terms of biological role, has antimicrobial and hemolytic activities. The protein is Bombinin-H4 of Bombina variegata (Yellow-bellied toad).